Reading from the N-terminus, the 353-residue chain is Stomatin-like protein 2, mitochondrial (353 aa).

The transit peptide at 1-28 (MLARAARGTGALLLRGSVQASGRIPRRA) directs the protein to the mitochondrion. Residue Ser-17 is modified to Phosphoserine; by PKC/PRKCZ. Phosphotyrosine is present on Tyr-124. Residue Lys-145 is modified to N6-acetyllysine; alternate. An N6-succinyllysine; alternate modification is found at Lys-145. Residues 215 to 252 (INVAEGKKQAQILASEAEKAEQINQAAGEASAVLAKAK) are a coiled coil. Position 233 is an N6-acetyllysine (Lys-233). Residues 324 to 353 (VPGAQNSSEARRDVQTTDTSIEELGRVKLS) are disordered. Residue Ser-330 is modified to Phosphoserine.

The protein belongs to the band 7/mec-2 family. Forms homooligomers. Interacts with MFN2; may form heterooligomers. Interacts with PHB1 and PHB2; recruits them to cardiolipin-enriched mitochondrial membranes and stabilizes them. Interacts with CACNA2D2.

Its subcellular location is the cell membrane. It is found in the mitochondrion. It localises to the mitochondrion inner membrane. The protein resides in the mitochondrion intermembrane space. The protein localises to the membrane raft. Its subcellular location is the cytoplasm. It is found in the cytoskeleton. Functionally, mitochondrial protein that probably regulates the biogenesis and the activity of mitochondria. Stimulates cardiolipin biosynthesis, binds cardiolipin-enriched membranes where it recruits and stabilizes some proteins including prohibitin and may therefore act in the organization of functional microdomains in mitochondrial membranes. Through regulation of the mitochondrial function may play a role into several biological processes including cell migration, cell proliferation, T-cell activation, calcium homeostasis and cellular response to stress. May play a role in calcium homeostasis through negative regulation of calcium efflux from mitochondria. Required for mitochondrial hyperfusion a pro-survival cellular response to stress which results in increased ATP production by mitochondria. May also regulate the organization of functional domains at the plasma membrane and play a role in T-cell activation through association with the T-cell receptor signaling complex and its regulation. This is Stomatin-like protein 2, mitochondrial (Stoml2) from Rattus norvegicus (Rat).